A 145-amino-acid chain; its full sequence is Putative antiporter subunit mnhG2 (145 aa).

The next 3 membrane-spanning stretches (helical) occupy residues 11–31 (IAAVMLLLGSFIALISAIGIV), 51–71 (VLLTLIGVLIYFIVNTGFFSV), and 72–92 (RLLLSLVFINLTSPVGMHLVA).

The protein belongs to the CPA3 antiporters (TC 2.A.63) subunit G family. May form a heterooligomeric complex that consists of seven subunits: mnhA2, mnhB2, mnhC2, mnhD2, mnhE2, mnhF2 and mnhG2.

It is found in the cell membrane. This chain is Putative antiporter subunit mnhG2 (mnhG2), found in Staphylococcus aureus (strain bovine RF122 / ET3-1).